The chain runs to 248 residues: UDP-2,3-diacylglucosamine hydrolase (248 aa).

Residues D8, H10, D41, N79, and H114 each contribute to the Mn(2+) site. A substrate-binding site is contributed by 79-80; it reads NR. 4 residues coordinate substrate: D122, N164, R167, and H195. Positions 195 and 197 each coordinate Mn(2+).

It belongs to the LpxH family. Mn(2+) serves as cofactor.

Its subcellular location is the cell inner membrane. It catalyses the reaction UDP-2-N,3-O-bis[(3R)-3-hydroxytetradecanoyl]-alpha-D-glucosamine + H2O = 2-N,3-O-bis[(3R)-3-hydroxytetradecanoyl]-alpha-D-glucosaminyl 1-phosphate + UMP + 2 H(+). Its pathway is glycolipid biosynthesis; lipid IV(A) biosynthesis; lipid IV(A) from (3R)-3-hydroxytetradecanoyl-[acyl-carrier-protein] and UDP-N-acetyl-alpha-D-glucosamine: step 4/6. Its function is as follows. Hydrolyzes the pyrophosphate bond of UDP-2,3-diacylglucosamine to yield 2,3-diacylglucosamine 1-phosphate (lipid X) and UMP by catalyzing the attack of water at the alpha-P atom. Involved in the biosynthesis of lipid A, a phosphorylated glycolipid that anchors the lipopolysaccharide to the outer membrane of the cell. This chain is UDP-2,3-diacylglucosamine hydrolase, found in Wigglesworthia glossinidia brevipalpis.